The following is a 332-amino-acid chain: Glycerol-3-phosphate dehydrogenase [NAD(P)+] (332 aa).

3 residues coordinate NADPH: tryptophan 11, arginine 30, and lysine 108. Lysine 108, glycine 137, and serine 139 together coordinate sn-glycerol 3-phosphate. Residue alanine 141 participates in NADPH binding. Sn-glycerol 3-phosphate contacts are provided by lysine 192, aspartate 245, serine 255, arginine 256, and asparagine 257. The active-site Proton acceptor is the lysine 192. Arginine 256 is an NADPH binding site. Residues valine 280 and glutamate 282 each contribute to the NADPH site.

Belongs to the NAD-dependent glycerol-3-phosphate dehydrogenase family.

It localises to the cytoplasm. The catalysed reaction is sn-glycerol 3-phosphate + NAD(+) = dihydroxyacetone phosphate + NADH + H(+). It carries out the reaction sn-glycerol 3-phosphate + NADP(+) = dihydroxyacetone phosphate + NADPH + H(+). It participates in membrane lipid metabolism; glycerophospholipid metabolism. Its function is as follows. Catalyzes the reduction of the glycolytic intermediate dihydroxyacetone phosphate (DHAP) to sn-glycerol 3-phosphate (G3P), the key precursor for phospholipid synthesis. The sequence is that of Glycerol-3-phosphate dehydrogenase [NAD(P)+] from Burkholderia ambifaria (strain MC40-6).